Reading from the N-terminus, the 275-residue chain is Large ribosomal subunit protein uL2 (275 aa).

A disordered region spans residues 222–275 (GVAMNPVDHPHGGGEGRNKGRHPTSPWGQKSKGLKTRNNKRTDSMIIRRRAKKK). Over residues 229–239 (DHPHGGGEGRN) the composition is skewed to basic and acidic residues.

It belongs to the universal ribosomal protein uL2 family. As to quaternary structure, part of the 50S ribosomal subunit. Forms a bridge to the 30S subunit in the 70S ribosome.

In terms of biological role, one of the primary rRNA binding proteins. Required for association of the 30S and 50S subunits to form the 70S ribosome, for tRNA binding and peptide bond formation. It has been suggested to have peptidyltransferase activity; this is somewhat controversial. Makes several contacts with the 16S rRNA in the 70S ribosome. In Psychrobacter arcticus (strain DSM 17307 / VKM B-2377 / 273-4), this protein is Large ribosomal subunit protein uL2.